A 137-amino-acid polypeptide reads, in one-letter code: uncharacterized protein (137 aa).

This is an uncharacterized protein from Mycobacterium leprae (strain TN).